The sequence spans 410 residues: MENNSQNVLKKIEDLKKEVRMLKEENSKTKRNLMWKIRKLEKDKLLIENERTRLDREVKSLRGEIERFRTPPLVIATVTEVLDDHRVAVKSTTGPHFVINYSRFIDRKQLEPGARVALNQQTFSIVDVLPSEKDPVVTGMEVEEKPDVSYEQIGGLEEQVREVKETVELPLKKPELFEKIGIEPPKGVLLYGPPGTGKTLLAKAVAHETNATFIKIVASEFVRKYIGEGARLVRGVFELAKEKSPSIIFIDEIDAVAAKRLKSSTSGDREVQRTLMQLLAELDGFESRGNVGIVAATNRPDILDPALLRPGRFDRFIEVPLPNEDGRREILKIHTSGMALAEEVDIELLARITDGASGADLKAICTEAGMFAIRDERDEVTMADFMDAVDKIMGVEKEEEYKQETGVMFG.

Positions 1–70 (MENNSQNVLK…LRGEIERFRT (70 aa)) form a coiled coil. Residues 195-200 (GTGKTL) and H334 contribute to the ATP site. The segment at 408–410 (MFG) is docks into pockets in the proteasome alpha-ring to cause gate opening.

It belongs to the AAA ATPase family. Homohexamer. The hexameric complex has a two-ring architecture resembling a top hat that caps the 20S proteasome core at one or both ends. Upon ATP-binding, the C-terminus of PAN interacts with the alpha-rings of the proteasome core by binding to the intersubunit pockets.

It is found in the cytoplasm. Its function is as follows. ATPase which is responsible for recognizing, binding, unfolding and translocation of substrate proteins into the archaeal 20S proteasome core particle. Is essential for opening the gate of the 20S proteasome via an interaction with its C-terminus, thereby allowing substrate entry and access to the site of proteolysis. Thus, the C-termini of the proteasomal ATPase function like a 'key in a lock' to induce gate opening and therefore regulate proteolysis. Unfolding activity requires energy from ATP hydrolysis, whereas ATP binding alone promotes ATPase-20S proteasome association which triggers gate opening, and supports translocation of unfolded substrates. The chain is Proteasome-activating nucleotidase from Methanothermobacter thermautotrophicus (strain ATCC 29096 / DSM 1053 / JCM 10044 / NBRC 100330 / Delta H) (Methanobacterium thermoautotrophicum).